The chain runs to 216 residues: V-type ATP synthase subunit D (216 aa).

It belongs to the V-ATPase D subunit family.

In terms of biological role, produces ATP from ADP in the presence of a proton gradient across the membrane. The chain is V-type ATP synthase subunit D from Clostridium botulinum (strain ATCC 19397 / Type A).